The primary structure comprises 1166 residues: Pesticidal crystal protein Cry1Ga (1166 aa).

The protein belongs to the delta endotoxin family.

Its function is as follows. Promotes colloidosmotic lysis by binding to the midgut epithelial cells of insects. The polypeptide is Pesticidal crystal protein Cry1Ga (cry1Ga) (Bacillus thuringiensis).